Reading from the N-terminus, the 379-residue chain is Alkanesulfonate monooxygenase (379 aa).

It belongs to the SsuD family.

The enzyme catalyses an alkanesulfonate + FMNH2 + O2 = an aldehyde + FMN + sulfite + H2O + 2 H(+). Functionally, catalyzes the desulfonation of aliphatic sulfonates. The chain is Alkanesulfonate monooxygenase from Sorangium cellulosum (strain So ce56) (Polyangium cellulosum (strain So ce56)).